The sequence spans 289 residues: ATP synthase subunit gamma, mitochondrial (289 aa).

This sequence belongs to the ATPase gamma chain family. In terms of assembly, F-type ATPases have 2 components, CF(1) - the catalytic core - and CF(0) - the membrane proton channel. CF(1) has five subunits: alpha(3), beta(3), gamma(1), delta(1), epsilon(1). CF(0) has three main subunits: a, b and c.

It localises to the mitochondrion. The protein resides in the mitochondrion inner membrane. In terms of biological role, mitochondrial membrane ATP synthase (F(1)F(0) ATP synthase or Complex V) produces ATP from ADP in the presence of a proton gradient across the membrane which is generated by electron transport complexes of the respiratory chain. F-type ATPases consist of two structural domains, F(1) - containing the extramembraneous catalytic core, and F(0) - containing the membrane proton channel, linked together by a central stalk and a peripheral stalk. During catalysis, ATP synthesis in the catalytic domain of F(1) is coupled via a rotary mechanism of the central stalk subunits to proton translocation. Part of the complex F(1) domain and the central stalk which is part of the complex rotary element. The gamma subunit protrudes into the catalytic domain formed of alpha(3)beta(3). Rotation of the central stalk against the surrounding alpha(3)beta(3) subunits leads to hydrolysis of ATP in three separate catalytic sites on the beta subunits. The polypeptide is ATP synthase subunit gamma, mitochondrial (ATP3) (Kluyveromyces lactis (strain ATCC 8585 / CBS 2359 / DSM 70799 / NBRC 1267 / NRRL Y-1140 / WM37) (Yeast)).